Here is a 177-residue protein sequence, read N- to C-terminus: UPF0177 protein YxdF (177 aa).

4 helical membrane passes run 2–22 (TLVL…KNTL), 30–50 (IFWL…VTVL), 117–137 (ALVH…SFII), and 152–172 (IVHS…DTFF).

This sequence belongs to the UPF0177 family.

The protein resides in the cell membrane. In Lactococcus lactis subsp. lactis (strain IL1403) (Streptococcus lactis), this protein is UPF0177 protein YxdF (yxdF).